The sequence spans 229 residues: Cytochrome c oxidase subunit 2 (229 aa).

Over M1–S14 the chain is Mitochondrial intermembrane. The chain crosses the membrane as a helical span at residues P15–T45. The Mitochondrial matrix portion of the chain corresponds to S46–Q59. Residues E60–M87 form a helical membrane-spanning segment. Residues D88–L229 are Mitochondrial intermembrane-facing. Cu cation-binding residues include H162, C197, E199, C201, H205, and M208. A Mg(2+)-binding site is contributed by E199.

Belongs to the cytochrome c oxidase subunit 2 family. Component of the cytochrome c oxidase (complex IV, CIV), a multisubunit enzyme composed of 14 subunits. The complex is composed of a catalytic core of 3 subunits MT-CO1, MT-CO2 and MT-CO3, encoded in the mitochondrial DNA, and 11 supernumerary subunits COX4I, COX5A, COX5B, COX6A, COX6B, COX6C, COX7A, COX7B, COX7C, COX8 and NDUFA4, which are encoded in the nuclear genome. The complex exists as a monomer or a dimer and forms supercomplexes (SCs) in the inner mitochondrial membrane with NADH-ubiquinone oxidoreductase (complex I, CI) and ubiquinol-cytochrome c oxidoreductase (cytochrome b-c1 complex, complex III, CIII), resulting in different assemblies (supercomplex SCI(1)III(2)IV(1) and megacomplex MCI(2)III(2)IV(2)). Found in a complex with TMEM177, COA6, COX18, COX20, SCO1 and SCO2. Interacts with TMEM177 in a COX20-dependent manner. Interacts with COX20. Interacts with COX16. It depends on Cu cation as a cofactor.

It localises to the mitochondrion inner membrane. It catalyses the reaction 4 Fe(II)-[cytochrome c] + O2 + 8 H(+)(in) = 4 Fe(III)-[cytochrome c] + 2 H2O + 4 H(+)(out). In terms of biological role, component of the cytochrome c oxidase, the last enzyme in the mitochondrial electron transport chain which drives oxidative phosphorylation. The respiratory chain contains 3 multisubunit complexes succinate dehydrogenase (complex II, CII), ubiquinol-cytochrome c oxidoreductase (cytochrome b-c1 complex, complex III, CIII) and cytochrome c oxidase (complex IV, CIV), that cooperate to transfer electrons derived from NADH and succinate to molecular oxygen, creating an electrochemical gradient over the inner membrane that drives transmembrane transport and the ATP synthase. Cytochrome c oxidase is the component of the respiratory chain that catalyzes the reduction of oxygen to water. Electrons originating from reduced cytochrome c in the intermembrane space (IMS) are transferred via the dinuclear copper A center (CU(A)) of subunit 2 and heme A of subunit 1 to the active site in subunit 1, a binuclear center (BNC) formed by heme A3 and copper B (CU(B)). The BNC reduces molecular oxygen to 2 water molecules using 4 electrons from cytochrome c in the IMS and 4 protons from the mitochondrial matrix. In Myxine glutinosa (Atlantic hagfish), this protein is Cytochrome c oxidase subunit 2 (MT-CO2).